The primary structure comprises 295 residues: Acetyl-coenzyme A carboxylase carboxyl transferase subunit beta (295 aa).

The disordered stretch occupies residues 1-20 (MSWLSKLMPSGIRTENTPAK). The region spanning 28–295 (LWEKCSNCGS…QPHPQDADAA (268 aa)) is the CoA carboxyltransferase N-terminal domain. Zn(2+) is bound by residues cysteine 32, cysteine 35, cysteine 51, and cysteine 54. The segment at 32–54 (CSNCGSALYGPELEENLEVCPKC) adopts a C4-type zinc-finger fold.

This sequence belongs to the AccD/PCCB family. Acetyl-CoA carboxylase is a heterohexamer composed of biotin carboxyl carrier protein (AccB), biotin carboxylase (AccC) and two subunits each of ACCase subunit alpha (AccA) and ACCase subunit beta (AccD). The cofactor is Zn(2+).

It is found in the cytoplasm. The enzyme catalyses N(6)-carboxybiotinyl-L-lysyl-[protein] + acetyl-CoA = N(6)-biotinyl-L-lysyl-[protein] + malonyl-CoA. The protein operates within lipid metabolism; malonyl-CoA biosynthesis; malonyl-CoA from acetyl-CoA: step 1/1. In terms of biological role, component of the acetyl coenzyme A carboxylase (ACC) complex. Biotin carboxylase (BC) catalyzes the carboxylation of biotin on its carrier protein (BCCP) and then the CO(2) group is transferred by the transcarboxylase to acetyl-CoA to form malonyl-CoA. The protein is Acetyl-coenzyme A carboxylase carboxyl transferase subunit beta of Xanthomonas axonopodis pv. citri (strain 306).